A 570-amino-acid polypeptide reads, in one-letter code: MRYSQYFIPTVKETPSDAEVISHQLMLRGGMIRKLAAGVYNYLPLGLRSIRKVENIVREEMNRAGAIELLMPTVQPAELWQESGRWEQYGKELLRFRDRKDTEFCLGPTHEEVITDLVRREVKSYRQLPINLYQIQGKFRDEIRPRFGLMRGREFIMKDAYSFDVDEKAADISYDKMYQAYRRIFERCGLKFRAVEADTGSIGGSWSHEFMVLAESGEDAIVSCTACDYAANVEKAEARQSAVTEHADPRDMEKVSTPEKKSIEEVAAFLAIHESSLVKTLVLLADNEPVVALLRGDHELNEIKLKNILGCDTLEMAGEEVVVKVTGAPTGFAGPVGLKAKIIADLAVQGMKNFVTGANAKDLHLKNVNLGRDFNVTTFADIRNVVLGDPCPRCESGTLEMWRGIEVGHVFKLGTKYSKAMKATYLDADGKEQIIFMGCYGIGIGRTVAACIEQNHDENGIIFPLPIAPFHCIISALNMKEDVVREASEAIYGQLAAAGIEVLLDDRDERPGFKFKDADLIGIPMRIVVGSKNLADGKVELKCRRSGEVELLSIADAVEKVKAAVNAALK.

Belongs to the class-II aminoacyl-tRNA synthetase family. ProS type 1 subfamily. As to quaternary structure, homodimer.

It localises to the cytoplasm. It carries out the reaction tRNA(Pro) + L-proline + ATP = L-prolyl-tRNA(Pro) + AMP + diphosphate. Its function is as follows. Catalyzes the attachment of proline to tRNA(Pro) in a two-step reaction: proline is first activated by ATP to form Pro-AMP and then transferred to the acceptor end of tRNA(Pro). As ProRS can inadvertently accommodate and process non-cognate amino acids such as alanine and cysteine, to avoid such errors it has two additional distinct editing activities against alanine. One activity is designated as 'pretransfer' editing and involves the tRNA(Pro)-independent hydrolysis of activated Ala-AMP. The other activity is designated 'posttransfer' editing and involves deacylation of mischarged Ala-tRNA(Pro). The misacylated Cys-tRNA(Pro) is not edited by ProRS. The polypeptide is Proline--tRNA ligase (Geotalea daltonii (strain DSM 22248 / JCM 15807 / FRC-32) (Geobacter daltonii)).